Here is an 898-residue protein sequence, read N- to C-terminus: MDPRYGAQPMPPRRSPSPGHPVQPGYQLDDNPFDDGRYGQYGPSSQHLAMPGHDPHGRLPTPSDHLSLNAAQSVDNLAGYGPPSGGDYAINPEAHHDAYYNQPYEPRPQHQGYDQGYEQDYDVPDNRPMLPHQHSDVPSEQYQDPPQQGGGIQRRKTVKQFALYRGNLVFDCRVPPLLLQQNPHGERDEFTHMRYSAATCDPNDFHDHDFTLRQRLFSKPRHTELFIVVTMYNEDEILFARTMTGVFKNIEYMCNRPNSKTWGKDAWKKIVVCVVSDGRSKINPRTRALLAGMGVYQEGIAKQHVNDKAVTAHIYEYTTQTHLQIKNNVVQLVHRRQPVQMLFCLKEKNAKKINSHRWFFNAFGRVLDPNICVLLDAGTRPGGSSIYHLWKAFDLEPMCGGACGEIKAMLGTGGRYLLNPLVAAQNFEYKMSNILDKPLESAFGFISVLPGAFSAYRYVALQNDKNGKGPLEKYFLGETLHGGSEAGLFESNMYLAEDRILCFELVTKRNCHWILQYVKSATGETDVPDTVTELVLQRRRWLNGSFFAAIYAIVHFLDFLRSDHTFLRKFAFFIEFIFNTINMIFAWFAIGNFFLVFKILTTSLGDDTLLGRTGEILGVVFTWLYGVFLITCFVLSLGNRPAGSGRLYTAMCWFWAIIMIYLMFAAVFISVKAIIADVNDENGFNISDIFKNKVFYMLIISLMSTYGIWLIASLIMLDPWHMVTSFAQYMLLTPTFTNVLNVYAFCNTHDVSWGTKGDDKVEELPSVNTKDGTGKTDLPDEGDLDAQYQREVAVFAQKFVEVKSAPTPSQLQERQMDYYRGVRTGVVLLWMVTNFGLAAIVLSSAGLDRISTKEDKEAEQLSRSNIYMSIVLWSVAGLSAFKFIGAMWFLVVRMFRGV.

Residues 1–154 form a disordered region; it reads MDPRYGAQPM…PPQQGGGIQR (154 aa). The segment covering 9 to 21 has biased composition (pro residues); the sequence is PMPPRRSPSPGHP. 2 stretches are compositionally biased toward polar residues: residues 64 to 75 and 136 to 146; these read DHLSLNAAQSVD and DVPSEQYQDPP. Transmembrane regions (helical) follow at residues 441-461, 540-560, 570-590, 616-636, and 651-671; these read SAFG…YVAL, RWLN…LDFL, FAFF…WFAI, ILGV…FVLS, and MCWF…FISV. A glycan (N-linked (GlcNAc...) asparagine) is linked at asparagine 685. 4 helical membrane-spanning segments follow: residues 697–717, 726–746, 825–845, and 870–890; these read MLII…LIML, FAQY…YAFC, GVVL…LSSA, and IVLW…MWFL.

The protein belongs to the chitin synthase family. Class I subfamily.

Its subcellular location is the cell membrane. It catalyses the reaction [(1-&gt;4)-N-acetyl-beta-D-glucosaminyl](n) + UDP-N-acetyl-alpha-D-glucosamine = [(1-&gt;4)-N-acetyl-beta-D-glucosaminyl](n+1) + UDP + H(+). Polymerizes chitin, a structural polymer of the cell wall and septum, by transferring the sugar moiety of UDP-GlcNAc to the non-reducing end of the growing chitin polymer. Shows additive effects in septum formation with CHS2, CHS3A, CHS4, CHS5, CHS6 and CHS7. Regulates mycelial growth and conidiation. Involved in virulence and mediates mycotoxin deoxinivalenol (DON) biosynthesis via the regulation of the expression of TRI4, TRI5 and TRI6. This chain is Chitin synthase 1, found in Gibberella zeae (strain ATCC MYA-4620 / CBS 123657 / FGSC 9075 / NRRL 31084 / PH-1) (Wheat head blight fungus).